The following is a 156-amino-acid chain: Small ribosomal subunit protein uS7 (156 aa).

Belongs to the universal ribosomal protein uS7 family. As to quaternary structure, part of the 30S ribosomal subunit. Contacts proteins S9 and S11.

Its function is as follows. One of the primary rRNA binding proteins, it binds directly to 16S rRNA where it nucleates assembly of the head domain of the 30S subunit. Is located at the subunit interface close to the decoding center, probably blocks exit of the E-site tRNA. The sequence is that of Small ribosomal subunit protein uS7 from Clostridium beijerinckii (strain ATCC 51743 / NCIMB 8052) (Clostridium acetobutylicum).